The sequence spans 278 residues: Undecaprenyl-diphosphatase 2 (278 aa).

7 consecutive transmembrane segments (helical) span residues 43-63 (GAAF…VYFW), 88-108 (ARLG…GLFF), 119-139 (LYIT…ADRI), 149-169 (LIWR…IPGV), 194-214 (FLLA…KSIG), 226-246 (LATL…LKLV), and 254-274 (FVWY…TGVI).

It belongs to the UppP family.

It localises to the cell inner membrane. The enzyme catalyses di-trans,octa-cis-undecaprenyl diphosphate + H2O = di-trans,octa-cis-undecaprenyl phosphate + phosphate + H(+). In terms of biological role, catalyzes the dephosphorylation of undecaprenyl diphosphate (UPP). Confers resistance to bacitracin. This Agrobacterium fabrum (strain C58 / ATCC 33970) (Agrobacterium tumefaciens (strain C58)) protein is Undecaprenyl-diphosphatase 2.